Here is a 110-residue protein sequence, read N- to C-terminus: Insulin (110 aa).

An N-terminal signal peptide occupies residues 1-24; that stretch reads MALWTRLLPLLALLALLGPDPAQA. Intrachain disulfides connect Cys-31/Cys-96, Cys-43/Cys-109, and Cys-95/Cys-100. The propeptide at 57 to 87 is c peptide; it reads EVEEQQGGQVELGGGPGAGLPQPLALEMALQ.

The protein belongs to the insulin family. As to quaternary structure, heterodimer of a B chain and an A chain linked by two disulfide bonds.

It is found in the secreted. Functionally, insulin decreases blood glucose concentration. It increases cell permeability to monosaccharides, amino acids and fatty acids. It accelerates glycolysis, the pentose phosphate cycle, and glycogen synthesis in liver. In Ictidomys tridecemlineatus (Thirteen-lined ground squirrel), this protein is Insulin (INS).